The sequence spans 212 residues: Cytidylate kinase (212 aa).

ATP is bound at residue 11 to 19 (GPAASGKGT). Positions 50-69 (GGDPADPAASEEQARSLSRL) are disordered.

This sequence belongs to the cytidylate kinase family. Type 1 subfamily.

The protein resides in the cytoplasm. The catalysed reaction is CMP + ATP = CDP + ADP. The enzyme catalyses dCMP + ATP = dCDP + ADP. This Acidiphilium cryptum (strain JF-5) protein is Cytidylate kinase.